A 617-amino-acid chain; its full sequence is Threonine--tRNA ligase (617 aa).

The catalytic stretch occupies residues 209–502 (DHRRLGKDLD…MTENYAGDFP (294 aa)). Cys302, His353, and His479 together coordinate Zn(2+).

The protein belongs to the class-II aminoacyl-tRNA synthetase family. Homodimer. The cofactor is Zn(2+).

The protein localises to the cytoplasm. The enzyme catalyses tRNA(Thr) + L-threonine + ATP = L-threonyl-tRNA(Thr) + AMP + diphosphate + H(+). Functionally, catalyzes the attachment of threonine to tRNA(Thr) in a two-step reaction: L-threonine is first activated by ATP to form Thr-AMP and then transferred to the acceptor end of tRNA(Thr). Also edits incorrectly charged L-seryl-tRNA(Thr). The chain is Threonine--tRNA ligase from Synechococcus sp. (strain CC9311).